The following is a 1342-amino-acid chain: DNA-directed RNA polymerase subunit beta (1342 aa).

This sequence belongs to the RNA polymerase beta chain family. The RNAP catalytic core consists of 2 alpha, 1 beta, 1 beta' and 1 omega subunit. When a sigma factor is associated with the core the holoenzyme is formed, which can initiate transcription.

It catalyses the reaction RNA(n) + a ribonucleoside 5'-triphosphate = RNA(n+1) + diphosphate. Its function is as follows. DNA-dependent RNA polymerase catalyzes the transcription of DNA into RNA using the four ribonucleoside triphosphates as substrates. The sequence is that of DNA-directed RNA polymerase subunit beta from Yersinia enterocolitica serotype O:8 / biotype 1B (strain NCTC 13174 / 8081).